The chain runs to 527 residues: Peptide chain release factor 3 (527 aa).

The tr-type G domain maps to 9 to 278 (NKRRTFAIIS…GLTQWAPKPQ (270 aa)). Residues 18 to 25 (SHPDAGKT), 86 to 90 (DTPGH), and 140 to 143 (NKLD) each bind GTP.

It belongs to the TRAFAC class translation factor GTPase superfamily. Classic translation factor GTPase family. PrfC subfamily.

The protein resides in the cytoplasm. In terms of biological role, increases the formation of ribosomal termination complexes and stimulates activities of RF-1 and RF-2. It binds guanine nucleotides and has strong preference for UGA stop codons. It may interact directly with the ribosome. The stimulation of RF-1 and RF-2 is significantly reduced by GTP and GDP, but not by GMP. The sequence is that of Peptide chain release factor 3 from Haemophilus influenzae (strain PittGG).